We begin with the raw amino-acid sequence, 408 residues long: Photox toxin (408 aa).

Positions 168 to 196 (NNQQHIKDSDGRKPVNNMPPPPPPPMADK) are disordered. The segment covering 184–193 (NMPPPPPPPM) has biased composition (pro residues). One can recognise a TR mART core domain in the interval 190 to 393 (PPPMADKTQK…LRLTDDASAD (204 aa)). Active-site residues include arginine 288, serine 318, and glutamate 355.

The protein in the C-terminal section; belongs to the SpvB family.

It carries out the reaction L-arginyl-[protein] + NAD(+) = N(omega)-(ADP-D-ribosyl)-L-arginyl-[protein] + nicotinamide + H(+). Its function is as follows. Mono-ADP-ribosylates chicken skeletal alpha-actin and human non-skeletal beta- and gamma-actin. Mono-ADP-ribosylates 'Arg-177' of yeast actin, blocking its ability to polymerize. Does not possess NAD(+)-glycohydrolase activity, unlike most mART enzymes. Upon expression in S.cerevisiae almost completely inhibits growth. This Photorhabdus laumondii subsp. laumondii (strain DSM 15139 / CIP 105565 / TT01) (Photorhabdus luminescens subsp. laumondii) protein is Photox toxin (phxA).